An 865-amino-acid polypeptide reads, in one-letter code: Bifunctional uridylyltransferase/uridylyl-removing enzyme (865 aa).

The interval 1-318 is uridylyltransferase; that stretch reads MPHVDLNPLK…FPRPDSDARL (318 aa). The interval 319–675 is uridylyl-removing; that stretch reads IDDDFRNLRE…VRPTEHGEGL (357 aa). Residues 437 to 559 enclose the HD domain; the sequence is VDQHTLAVVR…VGDERRLAAL (123 aa). 2 ACT domains span residues 676–762 and 789–865; these read QVMV…RLPH and RLSV…QQAA. Positions 747-767 are disordered; sequence DPHAARHAHAPRRLPHSHARR. Residues 751–767 are compositionally biased toward basic residues; sequence ARHAHAPRRLPHSHARR.

This sequence belongs to the GlnD family. Requires Mg(2+) as cofactor.

It carries out the reaction [protein-PII]-L-tyrosine + UTP = [protein-PII]-uridylyl-L-tyrosine + diphosphate. It catalyses the reaction [protein-PII]-uridylyl-L-tyrosine + H2O = [protein-PII]-L-tyrosine + UMP + H(+). With respect to regulation, uridylyltransferase (UTase) activity is inhibited by glutamine, while glutamine activates uridylyl-removing (UR) activity. In terms of biological role, modifies, by uridylylation and deuridylylation, the PII regulatory proteins (GlnB and homologs), in response to the nitrogen status of the cell that GlnD senses through the glutamine level. Under low glutamine levels, catalyzes the conversion of the PII proteins and UTP to PII-UMP and PPi, while under higher glutamine levels, GlnD hydrolyzes PII-UMP to PII and UMP (deuridylylation). Thus, controls uridylylation state and activity of the PII proteins, and plays an important role in the regulation of nitrogen assimilation and metabolism. The polypeptide is Bifunctional uridylyltransferase/uridylyl-removing enzyme (Bordetella pertussis (strain Tohama I / ATCC BAA-589 / NCTC 13251)).